Here is a 106-residue protein sequence, read N- to C-terminus: Large ribosomal subunit protein uL24 (106 aa).

It belongs to the universal ribosomal protein uL24 family. In terms of assembly, part of the 50S ribosomal subunit.

In terms of biological role, one of two assembly initiator proteins, it binds directly to the 5'-end of the 23S rRNA, where it nucleates assembly of the 50S subunit. Functionally, one of the proteins that surrounds the polypeptide exit tunnel on the outside of the subunit. This is Large ribosomal subunit protein uL24 from Blochmanniella pennsylvanica (strain BPEN).